The following is a 166-amino-acid chain: Phosphopantetheine adenylyltransferase (166 aa).

Substrate is bound at residue S11. ATP contacts are provided by residues 11–12 (SF) and H19. 3 residues coordinate substrate: K43, A76, and R90. ATP is bound by residues 91-93 (GLR), E101, and 126-132 (YRYFSSS).

Belongs to the bacterial CoaD family. As to quaternary structure, homohexamer. The cofactor is Mg(2+).

It is found in the cytoplasm. It catalyses the reaction (R)-4'-phosphopantetheine + ATP + H(+) = 3'-dephospho-CoA + diphosphate. The protein operates within cofactor biosynthesis; coenzyme A biosynthesis; CoA from (R)-pantothenate: step 4/5. Its function is as follows. Reversibly transfers an adenylyl group from ATP to 4'-phosphopantetheine, yielding dephospho-CoA (dPCoA) and pyrophosphate. The polypeptide is Phosphopantetheine adenylyltransferase (Streptococcus mutans serotype c (strain ATCC 700610 / UA159)).